Here is a 206-residue protein sequence, read N- to C-terminus: MLSAQLDEYLAEMNLSATTEQKKQLVGFVEMLNKWNKAYNLTSIRDPQQMLIRHIMDSLAVSKHLVGERFIDVGTGPGLPGIPLAIMNPERSFVLLDSLGKRIRFQKQVQHELGIHNISSVESRVEAFEPEVKFDGVLSRAFASIEDMLHWCHHLPSETGCYYALKGQLADNEMANIPQGFEVTDIIELQVPRLDEQRHLLRVIKK.

Residues G74, L79, V125 to E126, and R140 contribute to the S-adenosyl-L-methionine site.

It belongs to the methyltransferase superfamily. RNA methyltransferase RsmG family.

The protein localises to the cytoplasm. The enzyme catalyses guanosine(527) in 16S rRNA + S-adenosyl-L-methionine = N(7)-methylguanosine(527) in 16S rRNA + S-adenosyl-L-homocysteine. In terms of biological role, specifically methylates the N7 position of guanine in position 527 of 16S rRNA. In Shewanella woodyi (strain ATCC 51908 / MS32), this protein is Ribosomal RNA small subunit methyltransferase G.